The chain runs to 227 residues: tRNA (guanine-N(7)-)-methyltransferase (227 aa).

Glutamate 57, glutamate 82, aspartate 109, and aspartate 132 together coordinate S-adenosyl-L-methionine. Aspartate 132 is a catalytic residue. Residues lysine 136, aspartate 168, and 205-208 (TKFE) each bind substrate.

It belongs to the class I-like SAM-binding methyltransferase superfamily. TrmB family.

The enzyme catalyses guanosine(46) in tRNA + S-adenosyl-L-methionine = N(7)-methylguanosine(46) in tRNA + S-adenosyl-L-homocysteine. Its pathway is tRNA modification; N(7)-methylguanine-tRNA biosynthesis. Functionally, catalyzes the formation of N(7)-methylguanine at position 46 (m7G46) in tRNA. This is tRNA (guanine-N(7)-)-methyltransferase from Leifsonia xyli subsp. xyli (strain CTCB07).